The following is a 534-amino-acid chain: ATP synthase subunit alpha 2 (534 aa).

175–182 (GDRQTGKT) contributes to the ATP binding site. Positions 506 to 534 (FQPAPEPETAPKTKTDIKPKPKAAGGESS) are disordered. Residues 514–524 (TAPKTKTDIKP) show a composition bias toward basic and acidic residues.

This sequence belongs to the ATPase alpha/beta chains family. In terms of assembly, F-type ATPases have 2 components, CF(1) - the catalytic core - and CF(0) - the membrane proton channel. CF(1) has five subunits: alpha(3), beta(3), gamma(1), delta(1), epsilon(1). CF(0) has three main subunits: a(1), b(2) and c(9-12). The alpha and beta chains form an alternating ring which encloses part of the gamma chain. CF(1) is attached to CF(0) by a central stalk formed by the gamma and epsilon chains, while a peripheral stalk is formed by the delta and b chains.

Its subcellular location is the cell inner membrane. It catalyses the reaction ATP + H2O + 4 H(+)(in) = ADP + phosphate + 5 H(+)(out). Produces ATP from ADP in the presence of a proton gradient across the membrane. The alpha chain is a regulatory subunit. In Albidiferax ferrireducens (strain ATCC BAA-621 / DSM 15236 / T118) (Rhodoferax ferrireducens), this protein is ATP synthase subunit alpha 2.